The sequence spans 75 residues: MLVLKRKTGEAIQIGDDIELTILAIEGDQVKLGIHAPRQIDIHRKEIYLAIQDENAEASQSTGLMSQLLKQRTDS.

It belongs to the CsrA/RsmA family. Homodimer; the beta-strands of each monomer intercalate to form a hydrophobic core, while the alpha-helices form wings that extend away from the core.

The protein localises to the cytoplasm. Its function is as follows. A translational regulator that binds mRNA to regulate translation initiation and/or mRNA stability. Usually binds in the 5'-UTR at or near the Shine-Dalgarno sequence preventing ribosome-binding, thus repressing translation. Its main target seems to be the major flagellin gene, while its function is anatagonized by FliW. The sequence is that of Translational regulator CsrA from Exiguobacterium sibiricum (strain DSM 17290 / CCUG 55495 / CIP 109462 / JCM 13490 / 255-15).